Consider the following 250-residue polypeptide: MEIDLNADLGEGCGSDEALLDLVSSANIACGWHAGGANAMRDCVRWAVQKGVSIGAHPSFNDPENFGRKEMDLPASDIYAGVLYQLGALSAIAQAEGGRIAHVKPHGALYNQAARDSKIADAIVSAVHDFDPSVAVFALANSGLVTAARNAGLVAVEEVFADRGYRADGSLVPRKEPGALLDDEDEVLTRTLAMIREQRVQAVDGQWVSLNAQTICLHGDGPHALAFARRIRGALQDAGIEVHAAGAARA.

This sequence belongs to the LamB/PxpA family. In terms of assembly, forms a complex composed of PxpA, PxpB and PxpC.

It carries out the reaction 5-oxo-L-proline + ATP + 2 H2O = L-glutamate + ADP + phosphate + H(+). Catalyzes the cleavage of 5-oxoproline to form L-glutamate coupled to the hydrolysis of ATP to ADP and inorganic phosphate. This chain is 5-oxoprolinase subunit A, found in Paraburkholderia phytofirmans (strain DSM 17436 / LMG 22146 / PsJN) (Burkholderia phytofirmans).